The chain runs to 694 residues: MKFPKLRKRTVYWAVLTVFALFTIHFVFQYKEHNSHRVQPIVLIPKAFPSLILNSFDTQNEELVPIKLLKNCQIIRSYHTGYEENTKLLGQEPQSNFHKFNFTVFSSMKPIGLDLKQCQLLSSSSQVEVNDAVNMDASLHDILGKLLQDIRHGKLEYLQEIAPFFLPELQLQLNLNIVDRFWYRFSGSSIWLDQYNMYFMISRIAYSPHGVKNQPVVSLTYGQLFDRNWNEVKNINLLVPSNDPSKNGGHDSFRIISFPYFLPIPFWHDIDNTDGNYFGPEDPRLILVRNKQGYEEPLLIFNSYHRKFVHYDDDEDSIMGQTVKFQRSMFMCWPWQYQMGKSNVEGTSNPEYDNKVYNRVIELKVKLLADMKSQKNWTPFISEDSTNKFDSYIYFVYRWANLDVLKCSLLGDVAGDCVFDYRLDETLVPQNKVGPLRGGTQLVNLRQVIPRSVYHRLLPSHREIFIGFARTHLDNCGCGKVMYRPNLVILVKDAADKTYYKISHISSSLSFDVPIIGWNVYKPDDLCFDSNVLIPYSVSNWNITSLELDIEGGRWVSNDQLTLTLSISDSTVHRLDIRGLFQSILDLADRSLFIPVDRETRVIDEFQNGLQNPGSNPLNQDVNSLGVNNDNIVCALDASVEFCFEYGAKFSIPKQEEFYEVEQQEFNEELIDPKKHQYFKILGKYLYDHASVNS.

Topologically, residues 1–11 (MKFPKLRKRTV) are cytoplasmic. Residues 12–29 (YWAVLTVFALFTIHFVFQ) form a helical membrane-spanning segment. The Extracellular segment spans residues 30-694 (YKEHNSHRVQ…YLYDHASVNS (665 aa)). 2 N-linked (GlcNAc...) asparagine glycosylation sites follow: asparagine 101 and asparagine 542.

It belongs to the BMT family.

The protein resides in the membrane. Its function is as follows. Beta-mannosyltransferase involved in cell wall biosynthesis through beta-1,2-mannosylation of cell wall phosphopeptidomannan. Plays a role in the ability to produce hyphae in the presence of three bacterial species. This Candida albicans (strain SC5314 / ATCC MYA-2876) (Yeast) protein is Beta-mannosyltransferase 8 (BMT8).